The sequence spans 38 residues: Potassium channel toxin alpha-KTx 2.21 (38 aa).

3 cysteine pairs are disulfide-bonded: C7–C29, C13–C34, and C17–C36.

In terms of tissue distribution, expressed by the venom gland.

The protein resides in the secreted. In terms of biological role, inhibits human voltage-gated potassium (Kv) channels Kv1.2/KCNA2 and Kv1.3/KCNA3. Does not block human Kv1.1/KCNA1 at 100nM concentration. This is Potassium channel toxin alpha-KTx 2.21 from Centruroides bonito (Scorpion).